A 625-amino-acid chain; its full sequence is Probable potassium transport system protein Kup 2 (625 aa).

The next 12 membrane-spanning stretches (helical) occupy residues 15 to 35, 52 to 72, 98 to 118, 134 to 154, 164 to 184, 212 to 232, 246 to 266, 284 to 304, 336 to 356, 365 to 385, 394 to 414, and 417 to 437; these read LSFA…LYAF, ILSL…LVIV, GGWL…DGML, LSPN…FFLF, IGVY…ILGF, LALF…ALFA, WFAV…ALVL, FLPV…QAII, VYLP…VVIF, AYGI…GIIA, FKIL…AGNI, and LLTG…VMYT.

This sequence belongs to the HAK/KUP transporter (TC 2.A.72) family.

The protein localises to the cell inner membrane. The enzyme catalyses K(+)(in) + H(+)(in) = K(+)(out) + H(+)(out). Its function is as follows. Transport of potassium into the cell. Likely operates as a K(+):H(+) symporter. The chain is Probable potassium transport system protein Kup 2 from Legionella pneumophila (strain Corby).